Consider the following 158-residue polypeptide: NADH-quinone oxidoreductase subunit B (158 aa).

Positions 37, 38, 102, and 132 each coordinate [4Fe-4S] cluster.

Belongs to the complex I 20 kDa subunit family. In terms of assembly, NDH-1 is composed of 14 different subunits. Subunits NuoB, C, D, E, F, and G constitute the peripheral sector of the complex. [4Fe-4S] cluster is required as a cofactor.

Its subcellular location is the cell inner membrane. The catalysed reaction is a quinone + NADH + 5 H(+)(in) = a quinol + NAD(+) + 4 H(+)(out). In terms of biological role, NDH-1 shuttles electrons from NADH, via FMN and iron-sulfur (Fe-S) centers, to quinones in the respiratory chain. Couples the redox reaction to proton translocation (for every two electrons transferred, four hydrogen ions are translocated across the cytoplasmic membrane), and thus conserves the redox energy in a proton gradient. This is NADH-quinone oxidoreductase subunit B from Bordetella avium (strain 197N).